The primary structure comprises 428 residues: Cyclic AMP-responsive element-binding protein 3-like protein 3-A (428 aa).

The Cytoplasmic portion of the chain corresponds to 1–286 (MENYSDQGGD…VMNGSNKPVQ (286 aa)). Over residues 67-83 (VSGSPVWSPSPSDSGIS) the composition is skewed to low complexity. Residues 67–104 (VSGSPVWSPSPSDSGISEDPHSDHIDSPPPNASPPMEP) are disordered. Pro residues predominate over residues 93–103 (SPPPNASPPME). The bZIP domain occupies 210 to 273 (ILKKIRRKIR…ISLMEQLRRL (64 aa)). The basic motif stretch occupies residues 212–241 (KKIRRKIRNKQSAQESRKKKKEYIDGLESR). The interval 252–273 (LQRKVFQLEKCNISLMEQLRRL) is leucine-zipper. A helical; Signal-anchor for type II membrane protein transmembrane segment spans residues 287–303 (AGTCVLVLLLSFTLILL). At 304-428 (PNLKPFTDTK…SRRSPHADDM (125 aa)) the chain is on the lumenal side. The tract at residues 381–428 (TEYDPESHNHSFDQHDEHHHGDPITGHVATVTLNPRRGSRRSPHADDM) is disordered. Over residues 385–402 (PESHNHSFDQHDEHHHGD) the composition is skewed to basic and acidic residues. An N-linked (GlcNAc...) asparagine glycan is attached at Asn389.

This sequence belongs to the bZIP family. ATF subfamily. Binds DNA as a dimer. Controlled by regulated intramembrane proteolysis (RIP). A fragment containing the cytoplasmic transcription factor domain is released by proteolysis. The cleavage seems to be performed sequentially by site-1 and site-2 proteases.

It is found in the endoplasmic reticulum membrane. Its subcellular location is the nucleus. Functionally, transcriptional activator. Binds the cAMP response element (CRE). Activates transcription through box-B element and CRE. Seems to function synergistically with atf6. Regulates FGF21 transcription. This is Cyclic AMP-responsive element-binding protein 3-like protein 3-A (creb3l3a) from Danio rerio (Zebrafish).